A 176-amino-acid chain; its full sequence is Probable DNA-directed RNA polymerase subunit delta (176 aa).

One can recognise an HTH HARE-type domain in the interval Lys-14–Trp-81. Residues Leu-114–Ala-176 are disordered. Composition is skewed to acidic residues over residues Glu-116–Glu-145 and Val-153–Ala-176.

The protein belongs to the RpoE family. In terms of assembly, RNAP is composed of a core of 2 alpha, a beta and a beta' subunits. The core is associated with a delta subunit and one of several sigma factors.

In terms of biological role, participates in both the initiation and recycling phases of transcription. In the presence of the delta subunit, RNAP displays an increased specificity of transcription, a decreased affinity for nucleic acids, and an increased efficiency of RNA synthesis because of enhanced recycling. This is Probable DNA-directed RNA polymerase subunit delta from Staphylococcus aureus (strain bovine RF122 / ET3-1).